The following is a 105-amino-acid chain: TMEM14 protein homolog YJR085C (105 aa).

The next 3 membrane-spanning stretches (helical) occupy residues 26 to 46 (IPSL…GYLL), 53 to 73 (GLEM…IRGM), and 77 to 97 (FTKP…YYYY).

Belongs to the TMEM14 family.

It is found in the mitochondrion. It localises to the membrane. This Saccharomyces cerevisiae (strain ATCC 204508 / S288c) (Baker's yeast) protein is TMEM14 protein homolog YJR085C.